An 809-amino-acid chain; its full sequence is Leucine--tRNA ligase (809 aa).

Residues 40–51 (PYPSGQGLHVGH) carry the 'HIGH' region motif. Positions 581-585 (KMSKS) match the 'KMSKS' region motif. Residue Lys-584 coordinates ATP.

The protein belongs to the class-I aminoacyl-tRNA synthetase family.

The protein resides in the cytoplasm. The enzyme catalyses tRNA(Leu) + L-leucine + ATP = L-leucyl-tRNA(Leu) + AMP + diphosphate. This Levilactobacillus brevis (strain ATCC 367 / BCRC 12310 / CIP 105137 / JCM 1170 / LMG 11437 / NCIMB 947 / NCTC 947) (Lactobacillus brevis) protein is Leucine--tRNA ligase.